Consider the following 346-residue polypeptide: Endosome-associated-trafficking regulator 1 (346 aa).

Residues 46 to 67 are compositionally biased toward polar residues; it reads FVSSNSKRAFSKDSNQSTTQFR. Disordered stretches follow at residues 46–77, 93–129, and 153–173; these read FVSS…DGNL, LQED…GDES, and SPPA…SDSE. A coiled-coil region spans residues 170–317; the sequence is SDSEEGLRLL…SGAQSSIKQL (148 aa).

This sequence belongs to the ENTR1 family.

It is found in the cytoplasm. The protein localises to the early endosome. It localises to the endosome. Its subcellular location is the recycling endosome. The protein resides in the midbody. It is found in the cytoskeleton. The protein localises to the microtubule organizing center. It localises to the centrosome. Its subcellular location is the cilium basal body. In terms of biological role, endosome-associated protein that plays a role in membrane receptor sorting, cytokinesis and ciliogenesis. The sequence is that of Endosome-associated-trafficking regulator 1 from Xenopus tropicalis (Western clawed frog).